The chain runs to 322 residues: UV DNA damage endonuclease (322 aa).

The protein belongs to the uve1/UvsE family.

Functionally, component in a DNA repair pathway. Removal of UV LIGHT damaged nucleotides. Recognizes pyrimidine dimers and cleave a phosphodiester bond immediately 5' to the lesion. This Nostoc sp. (strain PCC 7120 / SAG 25.82 / UTEX 2576) protein is UV DNA damage endonuclease.